Reading from the N-terminus, the 445-residue chain is 3-phosphoshikimate 1-carboxyvinyltransferase (445 aa).

3 residues coordinate 3-phosphoshikimate: K28, S29, and R33. Phosphoenolpyruvate is bound at residue K28. G101 and R129 together coordinate phosphoenolpyruvate. 3-phosphoshikimate is bound by residues S175, Q177, D328, and K355. A phosphoenolpyruvate-binding site is contributed by Q177. The active-site Proton acceptor is D328. Phosphoenolpyruvate contacts are provided by R359 and R402.

The protein belongs to the EPSP synthase family. As to quaternary structure, monomer.

It localises to the cytoplasm. It carries out the reaction 3-phosphoshikimate + phosphoenolpyruvate = 5-O-(1-carboxyvinyl)-3-phosphoshikimate + phosphate. Its pathway is metabolic intermediate biosynthesis; chorismate biosynthesis; chorismate from D-erythrose 4-phosphate and phosphoenolpyruvate: step 6/7. In terms of biological role, catalyzes the transfer of the enolpyruvyl moiety of phosphoenolpyruvate (PEP) to the 5-hydroxyl of shikimate-3-phosphate (S3P) to produce enolpyruvyl shikimate-3-phosphate and inorganic phosphate. This chain is 3-phosphoshikimate 1-carboxyvinyltransferase, found in Rhodopseudomonas palustris (strain HaA2).